Consider the following 310-residue polypeptide: Olfactory receptor 5P56 (310 aa).

Residues 1–25 (MEAQNHTTVKEFILLGLTENSTLRV) are Extracellular-facing. Residues asparagine 5 and asparagine 20 are each glycosylated (N-linked (GlcNAc...) asparagine). A helical membrane pass occupies residues 26–46 (ILFMIFLGIYTVTLVGNFSII). The Cytoplasmic portion of the chain corresponds to 47–54 (SLIRSCPQ). A helical transmembrane segment spans residues 55–75 (LHTPMYLFLSHLALVDIGFST). Topologically, residues 76–99 (SITPIMLTGFLGHTVTLSVAACVA) are extracellular. Cysteine 97 and cysteine 189 are joined by a disulfide. A helical membrane pass occupies residues 100 to 120 (QFCIAVTFGTVECFLLAVMAY). Topologically, residues 121-133 (DRYVAICSPLLYS) are cytoplasmic. The helical transmembrane segment at 134–154 (THMSPRICFLLVGASYVGGCV) threads the bilayer. Over 155–196 (NSGTFTSCLLILSFCGPNQIDHFFCDFPAVLKLSCSDVSIIG) the chain is Extracellular. A helical membrane pass occupies residues 197–217 (IIPSISAGSIIVITVFVIAVS). Residues 218–237 (YTYILITILNMRSTEGRHKA) are Cytoplasmic-facing. The chain crosses the membrane as a helical span at residues 238–258 (FSTCTSHLTAVTLYYGTITFI). Residues 259–271 (YVMPKSNYSTAQN) lie on the Extracellular side of the membrane. N-linked (GlcNAc...) asparagine glycosylation occurs at asparagine 265. The chain crosses the membrane as a helical span at residues 272–292 (KILSVFYTVVIPMLNPLIYSL). The Cytoplasmic portion of the chain corresponds to 293–310 (RNRDVKEALRKAIIRIFP).

It belongs to the G-protein coupled receptor 1 family.

It localises to the cell membrane. Its function is as follows. Potential odorant receptor. The chain is Olfactory receptor 5P56 from Mus musculus (Mouse).